A 108-amino-acid chain; its full sequence is Insulin (108 aa).

A signal peptide spans 1 to 21 (MAVWIQAGALLFLLAVSSVNA). 3 cysteine pairs are disulfide-bonded: Cys-30–Cys-94, Cys-42–Cys-107, and Cys-93–Cys-98. Positions 54-85 (DVDPPLGFLPPKSAQETEVADFAFKDHAEVIR) are cleaved as a propeptide — c peptide.

Belongs to the insulin family. In terms of assembly, heterodimer of a B chain and an A chain linked by two disulfide bonds.

Its subcellular location is the secreted. Functionally, insulin decreases blood glucose concentration. It increases cell permeability to monosaccharides, amino acids and fatty acids. It accelerates glycolysis, the pentose phosphate cycle, and glycogen synthesis in liver. The protein is Insulin (ins) of Cyprinus carpio (Common carp).